The sequence spans 360 residues: DNA replication and repair protein RecF (360 aa).

30 to 37 (GQNGSGKT) is a binding site for ATP.

This sequence belongs to the RecF family.

Its subcellular location is the cytoplasm. In terms of biological role, the RecF protein is involved in DNA metabolism; it is required for DNA replication and normal SOS inducibility. RecF binds preferentially to single-stranded, linear DNA. It also seems to bind ATP. This Shewanella sp. (strain MR-7) protein is DNA replication and repair protein RecF.